We begin with the raw amino-acid sequence, 337 residues long: Holliday junction branch migration complex subunit RuvB (337 aa).

Positions 4 to 184 (ADRLIQPQVL…FGIPLRLEFY (181 aa)) are large ATPase domain (RuvB-L). ATP-binding positions include Arg-24, Gly-65, Lys-68, Thr-69, Thr-70, 131–133 (EDY), Arg-174, Tyr-184, and Arg-221. Thr-69 lines the Mg(2+) pocket. Residues 185–255 (NVKDLCTIVT…VAQQALDMLD (71 aa)) form a small ATPAse domain (RuvB-S) region. The head domain (RuvB-H) stretch occupies residues 258–337 (QEGFDYLDRK…FNIITPDVPK (80 aa)). DNA is bound by residues Arg-294, Arg-313, and Arg-318.

The protein belongs to the RuvB family. Homohexamer. Forms an RuvA(8)-RuvB(12)-Holliday junction (HJ) complex. HJ DNA is sandwiched between 2 RuvA tetramers; dsDNA enters through RuvA and exits via RuvB. An RuvB hexamer assembles on each DNA strand where it exits the tetramer. Each RuvB hexamer is contacted by two RuvA subunits (via domain III) on 2 adjacent RuvB subunits; this complex drives branch migration. In the full resolvosome a probable DNA-RuvA(4)-RuvB(12)-RuvC(2) complex forms which resolves the HJ.

Its subcellular location is the cytoplasm. It carries out the reaction ATP + H2O = ADP + phosphate + H(+). The RuvA-RuvB-RuvC complex processes Holliday junction (HJ) DNA during genetic recombination and DNA repair, while the RuvA-RuvB complex plays an important role in the rescue of blocked DNA replication forks via replication fork reversal (RFR). RuvA specifically binds to HJ cruciform DNA, conferring on it an open structure. The RuvB hexamer acts as an ATP-dependent pump, pulling dsDNA into and through the RuvAB complex. RuvB forms 2 homohexamers on either side of HJ DNA bound by 1 or 2 RuvA tetramers; 4 subunits per hexamer contact DNA at a time. Coordinated motions by a converter formed by DNA-disengaged RuvB subunits stimulates ATP hydrolysis and nucleotide exchange. Immobilization of the converter enables RuvB to convert the ATP-contained energy into a lever motion, pulling 2 nucleotides of DNA out of the RuvA tetramer per ATP hydrolyzed, thus driving DNA branch migration. The RuvB motors rotate together with the DNA substrate, which together with the progressing nucleotide cycle form the mechanistic basis for DNA recombination by continuous HJ branch migration. Branch migration allows RuvC to scan DNA until it finds its consensus sequence, where it cleaves and resolves cruciform DNA. This is Holliday junction branch migration complex subunit RuvB from Shewanella denitrificans (strain OS217 / ATCC BAA-1090 / DSM 15013).